We begin with the raw amino-acid sequence, 1527 residues long: Peroxidasin (1527 aa).

The N-terminal stretch at 1 to 23 is a signal peptide; the sequence is MRFMLLMLQLLGLLLLLAGGVQS. The region spanning 24–53 is the LRRNT domain; that stretch reads VYCPAGCTCLERTVRCIRAKLSAVPKLPQD. LRR repeat units follow at residues 51 to 74, 75 to 98, 99 to 122, 124 to 146, 147 to 170, and 172 to 196; these read PQDT…AFSG, LAQL…ALNG, LTAL…IFQR, PRLE…LFDN, LPRL…GFNR, and NNLK…LWRR. Ig-like C2-type domains follow at residues 236–322, 365–453, 458–545, and 553–643; these read PQFL…QPVR, PHFT…ARIE, PEIL…ATIK, and PQLA…ALVT. Intrachain disulfides connect Cys257-Cys307, Cys388-Cys437, Cys479-Cys529, and Cys574-Cys627. Asn419 carries N-linked (GlcNAc...) asparagine glycosylation. Asn616, Asn673, Asn682, Asn731, and Asn767 each carry an N-linked (GlcNAc...) asparagine glycan. The cysteines at positions 768 and 784 are disulfide-linked. Position 862 (Asp862) interacts with heme b. Residue His863 is the Proton acceptor of the active site. Asp864 is a Ca(2+) binding site. 2 disulfides stabilise this stretch: Cys882/Cys892 and Cys886/Cys909. Ca(2+) contacts are provided by Thr941, Tyr943, Asp945, and Ser947. The N-linked (GlcNAc...) asparagine glycan is linked to Asn962. A disulfide bond links Cys994 and Cys1005. 2 residues coordinate heme b: Glu1015 and His1109. Asn1120 and Asn1213 each carry an N-linked (GlcNAc...) asparagine glycan. Disulfide bonds link Cys1212–Cys1269 and Cys1310–Cys1336. A coiled-coil region spans residues 1403 to 1441; the sequence is NEERVSGLEELIGSFQKELKKLHKKLRKLEDSCNSADSE. Residues 1463 to 1524 enclose the VWFC domain; it reads SHCVDDKGTT…PPEACCPHCP (62 aa).

It belongs to the peroxidase family. XPO subfamily. In terms of assembly, homotrimer; disulfide-linked. Requires Ca(2+) as cofactor. The cofactor is heme b. In terms of tissue distribution, expressed in hemocytes. Also expressed in the fat body and gastric caeca.

Its subcellular location is the secreted. The enzyme catalyses (5R)-5-hydroxy-L-lysyl-[collagen] + L-methionyl-[collagen] + H2O2 = [collagen]-(5R)-5-hydroxy-L-lysyl-N-S-L-methionyl-[collagen] + 2 H2O + H(+). It catalyses the reaction bromide + H2O2 = hypobromite + H2O. It carries out the reaction (5R)-5-hydroxy-L-lysyl-[collagen] + L-methionyl-[collagen] + hypobromite = [collagen]-(5R)-5-hydroxy-L-lysyl-N-S-L-methionyl-[collagen] + bromide + H2O + H(+). The catalysed reaction is L-lysyl-[collagen] + L-methionyl-[collagen] + H2O2 = [collagen]-L-lysyl-N-S-L-methionyl-[collagen] + 2 H2O + H(+). The enzyme catalyses L-lysyl-[collagen] + L-methionyl-[collagen] + hypobromite = [collagen]-L-lysyl-N-S-L-methionyl-[collagen] + bromide + H2O + H(+). It catalyses the reaction L-tyrosyl-[protein] + bromide + H2O2 + H(+) = 3-bromo-L-tyrosyl-[protein] + 2 H2O. It carries out the reaction hypobromite + L-tyrosyl-[protein] + H(+) = 3-bromo-L-tyrosyl-[protein] + H2O. Functionally, catalyzes the two-electron oxidation of bromide by hydrogen peroxide and generates hypobromite as a reactive intermediate which mediates the formation of sulfilimine cross-links between methionine and hydroxylysine residues within an uncross-linked collagen IV NC1 hexamer. Plays a role in extracellular matrix consolidation, phagocytosis and defense. This is Peroxidasin from Drosophila melanogaster (Fruit fly).